A 208-amino-acid chain; its full sequence is Large ribosomal subunit protein uL3 (208 aa).

Positions Ser-134–Phe-153 are disordered.

It belongs to the universal ribosomal protein uL3 family. In terms of assembly, part of the 50S ribosomal subunit. Forms a cluster with proteins L14 and L19.

In terms of biological role, one of the primary rRNA binding proteins, it binds directly near the 3'-end of the 23S rRNA, where it nucleates assembly of the 50S subunit. In Treponema pallidum (strain Nichols), this protein is Large ribosomal subunit protein uL3.